A 2498-amino-acid polypeptide reads, in one-letter code: Nuclear receptor corepressor 1 (2498 aa).

4 disordered regions span residues 1-38, 54-84, 134-169, and 198-223; these read MSSS…QQEY, IQQQ…SGYD, SEVK…SKLS, and QQQL…VEQK. Basic and acidic residues-rich tracts occupy residues 71–82, 134–148, and 204–213; these read PVSDRPQDRRSG, SEVK…KHES, and EAAKPPEPEK. Positions 154-304 are interaction with tbl1xr1-A; the sequence is SGQPGDDQDA…REQNICQRYD (151 aa). Positions 168-208 form a coiled coil; it reads LSKEELIQSMDRVDREIAKVEQQILKLKKKQQQLEEEAAKP. The 52-residue stretch at 427-478 folds into the SANT 1 domain; it reads QFMNVWTDHEKEIFKEKFVRHPKNFGLIASYLERKNVSDCVLYYYLTKKNEN. Residues 483–493 show a composition bias toward basic residues; it reads VRRNYPKRRGR. Disordered regions lie at residues 483–649, 668–912, 1075–1122, 1417–1436, 1470–1583, 1737–1851, and 1916–1990; these read VRRN…GSKS, NLLQ…FGSR, SLSD…GTPG, DLVS…IMEG, SWGV…QRES, PGTQ…AQES, and PQME…TAHT. Composition is skewed to basic and acidic residues over residues 502 to 525 and 535 to 548; these read SQEE…KEDE and KEEL…KIDA. Positions 502-552 form a coiled coil; it reads SQEEKEIEKVEEEKADRNDKKEDERREEEEKEEKEELREGAKDKIDAVAED. A compositionally biased stretch (low complexity) spans 582 to 611; it reads ASEAAAANAVTTATTAPVTTTSTATTVAPV. Residues 612–627 show a composition bias toward pro residues; sequence PVAPPPEEPTPPPPPQ. One can recognise an SANT 2 domain in the interval 628–665; sequence EQSLVDHGRNWGAIAKMVGSKSESQCKNFYFNYKRRHN. Polar residues predominate over residues 689–699; the sequence is QCDSIASTVSA. Residues 700–719 are compositionally biased toward acidic residues; that stretch reads QEDDENEASNEEENPEDSEG. Low complexity-rich tracts occupy residues 727–738 and 761–774; these read ESAPSPSPAEAA and DAAS…SPSP. Residues 854-863 show a composition bias toward basic and acidic residues; that stretch reads MERLMDRAEA. Polar residues-rich tracts occupy residues 872–891 and 1102–1122; these read QNIS…SATC and ATSS…GTPG. Over residues 1484–1501 the composition is skewed to basic and acidic residues; the sequence is KMGERSKHEDTKSSDAIR. Residues 1505-1516 are compositionally biased toward polar residues; that stretch reads TSVVSSGPSVLR. Residues 1545–1558 show a composition bias toward low complexity; that stretch reads PSPMSRSSPMARSA. The stretch at 1765–1804 forms a coiled coil; that stretch reads VSAERERERERERERDREREKEQRERESDRERERDRLAHA. Residues 1767–1802 are compositionally biased toward basic and acidic residues; that stretch reads AERERERERERERDREREKEQRERESDRERERDRLA. 2 stretches are compositionally biased toward low complexity: residues 1803–1813 and 1820–1835; these read HAAAAAAAASA and RPVS…RPSS. A compositionally biased stretch (polar residues) spans 1842 to 1851; sequence PSPSVRAQES. A compositionally biased stretch (basic and acidic residues) spans 1921-1942; that stretch reads AKPKESKNDSARSEENLSRRNA. Positions 1958-1980 are enriched in low complexity; that stretch reads SPYTSSSFSSSKSQSQPSSAVYS. Residues 2012-2016 carry the CORNR box 1 motif; the sequence is IDVII. A disordered region spans residues 2022–2109; sequence SDKDGRERNS…SPPQQTIPGH (88 aa). Low complexity predominate over residues 2031–2040; that stretch reads SQSSDASSSH. A compositionally biased stretch (basic and acidic residues) spans 2043 to 2052; the sequence is HRYEAPRETI. A compositionally biased stretch (polar residues) spans 2093-2106; that stretch reads RYRQQQESPPQQTI. A CORNR box 2 motif is present at residues 2123–2127; that stretch reads ICHII. Positions 2136-2145 are enriched in low complexity; the sequence is PVNQPLQQPP. Residues 2136–2222 are disordered; that stretch reads PVNQPLQQPP…PISPPQAPML (87 aa). Positions 2146–2175 are enriched in polar residues; it reads ASTFQSTNPTSTAVRTKASSRFSPESQVQP. Basic and acidic residues predominate over residues 2190-2209; that stretch reads IPDKPRGRPGKSPDRGHISE. A CORNR box 3 motif is present at residues 2326–2330; that stretch reads LEDII. Disordered stretches follow at residues 2344-2446 and 2464-2498; these read DHGV…YNPL and TSMT…DSDE. Residues 2353 to 2362 are compositionally biased toward polar residues; that stretch reads QGNQSGTPNS. Residues 2380 to 2394 are compositionally biased toward basic residues; that stretch reads HKQKLISKYGSRKTK. Polar residues-rich tracts occupy residues 2464–2476 and 2489–2498; these read TSMT…QQSR and QYETLSDSDE.

This sequence belongs to the N-CoR nuclear receptor corepressors family. Forms a large corepressor complex that contains sin3a/b, histone deacetylases hdac1 and hdac2, rbbp4 and possibly rbbp7. Interacts with the thyroid receptor (TR, composed of rxra and thrb) and the retinoid acid receptor (RAR, composed of rxra and rara) in the absence of ligand. Interacts with tbl1xr1-A and possibly tbl1xr1-B. Interacts with zbtb33/kaiso.

It localises to the nucleus. In terms of biological role, mediates transcriptional repression by certain nuclear receptors. Participates in complexes which promote histone deacetylation and the formation of repressive chromatin structures which may impede access by the basal transcription machinery. In association with hdac3, may play a role in the regulation of the circadian clock. The sequence is that of Nuclear receptor corepressor 1 (ncor1) from Xenopus laevis (African clawed frog).